We begin with the raw amino-acid sequence, 223 residues long: Deoxyribose-phosphate aldolase (223 aa).

Aspartate 91 serves as the catalytic Proton donor/acceptor. The Schiff-base intermediate with acetaldehyde role is filled by lysine 153. Catalysis depends on lysine 182, which acts as the Proton donor/acceptor.

Belongs to the DeoC/FbaB aldolase family. DeoC type 1 subfamily.

It localises to the cytoplasm. It catalyses the reaction 2-deoxy-D-ribose 5-phosphate = D-glyceraldehyde 3-phosphate + acetaldehyde. Its pathway is carbohydrate degradation; 2-deoxy-D-ribose 1-phosphate degradation; D-glyceraldehyde 3-phosphate and acetaldehyde from 2-deoxy-alpha-D-ribose 1-phosphate: step 2/2. Catalyzes a reversible aldol reaction between acetaldehyde and D-glyceraldehyde 3-phosphate to generate 2-deoxy-D-ribose 5-phosphate. The sequence is that of Deoxyribose-phosphate aldolase from Streptococcus pyogenes serotype M12 (strain MGAS2096).